Consider the following 573-residue polypeptide: Glucocorticoid modulatory element-binding protein 1 (573 aa).

Alanine 2 is subject to N-acetylalanine. The SAND domain maps to 82–166; the sequence is TGTIEANEDM…RKMMDSGQID (85 aa). Zn(2+) is bound at residue cysteine 113. Lysine 139, lysine 143, lysine 146, and arginine 157 together coordinate DNA. Histidine 170, cysteine 174, and cysteine 178 together coordinate Zn(2+). Positions 321-367 form a coiled coil; that stretch reads LDNRRNQVEQGEEQFLYTLTDLERQLEEQKKQGQDHRLKSQTVQNVV. A disordered region spans residues 370–398; it reads PVSTPKPPKRPRLQRPASTTVLSPSPPVQ.

In terms of assembly, homodimer, and heterodimer of GMEB1 and GMEB2. GMEB1 and GMEB2 form the parvovirus initiator complex (PIF). Interacts with the glucocorticoid receptor (NR3C1) and NCOA2/TIF2. May interact with HSP27 and CREB-binding protein (CBP).

Its subcellular location is the nucleus. The protein resides in the cytoplasm. Functionally, trans-acting factor that binds to glucocorticoid modulatory elements (GME) present in the TAT (tyrosine aminotransferase) promoter and increases sensitivity to low concentrations of glucocorticoids. Also binds to the transferrin receptor promoter. Essential auxiliary factor for the replication of parvoviruses. This is Glucocorticoid modulatory element-binding protein 1 (GMEB1) from Homo sapiens (Human).